A 796-amino-acid polypeptide reads, in one-letter code: Inactive dipeptidyl peptidase 10 (796 aa).

At 1 to 34 (MNQTASVSHHIKCQPSKTIKELGSNSPPQRNWKG) the chain is on the cytoplasmic side. The mediates effects on KCND2 stretch occupies residues 1–55 (MNQTASVSHHIKCQPSKTIKELGSNSPPQRNWKGIAIALLVILVVCSLITMSVIL). The chain crosses the membrane as a helical; Signal-anchor for type II membrane protein span at residues 35–55 (IAIALLVILVVCSLITMSVIL). The Extracellular segment spans residues 56-796 (LTPDELTNSS…VLPQEPEEDE (741 aa)). 4 N-linked (GlcNAc...) asparagine glycosylation sites follow: Asn63, Asn90, Asn111, and Asn119. A phosphotyrosine mark is found at Tyr138 and Tyr143. 3 N-linked (GlcNAc...) asparagine glycosylation sites follow: Asn257, Asn342, and Asn748.

This sequence belongs to the peptidase S9B family. DPPIV subfamily. As to quaternary structure, may form oligomers. Interacts with KCND1. Interacts with KCND2. Identified in a complex with KCND2 and KCNIP3. Post-translationally, N-glycosylation is important for cell surface expression, specially at Asn-257, which is crucial. Detected in brain cortex, hippocampus, thalamus and cerebellum Purkinje cells (at protein level).

The protein localises to the cell membrane. Its function is as follows. Promotes cell surface expression of the potassium channel KCND2. Modulates the activity and gating characteristics of the potassium channel KCND2. Has no dipeptidyl aminopeptidase activity. This chain is Inactive dipeptidyl peptidase 10 (Dpp10), found in Rattus norvegicus (Rat).